A 215-amino-acid chain; its full sequence is Adenylate kinase (215 aa).

Residue 10 to 15 (GCGKGT) participates in ATP binding. Positions 30-59 (STGDIFRQTIDQKGPYWEELKSYISKGLLV) are NMP. AMP-binding positions include T31, R36, 57–59 (LLV), and Q91. The interval 120–157 (GRRICSKCKRIYNIHYSAPKKEDICDDDGEFLIQRKDD) is LID. R121 contributes to the ATP binding site. Zn(2+)-binding residues include C124 and C127. 130–131 (IY) is an ATP binding site. Residues C144 and D147 each contribute to the Zn(2+) site. Residues R154 and R165 each contribute to the AMP site.

Belongs to the adenylate kinase family. As to quaternary structure, monomer.

It is found in the cytoplasm. The catalysed reaction is AMP + ATP = 2 ADP. The protein operates within purine metabolism; AMP biosynthesis via salvage pathway; AMP from ADP: step 1/1. Its function is as follows. Catalyzes the reversible transfer of the terminal phosphate group between ATP and AMP. Plays an important role in cellular energy homeostasis and in adenine nucleotide metabolism. In Malacoplasma penetrans (strain HF-2) (Mycoplasma penetrans), this protein is Adenylate kinase.